Reading from the N-terminus, the 55-residue chain is MPQLNPTPWFPIMMLSWLIFSLIIQPKLLLFTPTNPPSNKTTTTTRSNPWTWPWT.

The chain crosses the membrane as a helical span at residues 10–30; sequence FPIMMLSWLIFSLIIQPKLLL. Residues 35-55 form a disordered region; the sequence is NPPSNKTTTTTRSNPWTWPWT. Over residues 37 to 55 the composition is skewed to low complexity; the sequence is PSNKTTTTTRSNPWTWPWT.

Belongs to the ATPase protein 8 family. Component of the ATP synthase complex composed at least of ATP5F1A/subunit alpha, ATP5F1B/subunit beta, ATP5MC1/subunit c (homooctomer), MT-ATP6/subunit a, MT-ATP8/subunit 8, ATP5ME/subunit e, ATP5MF/subunit f, ATP5MG/subunit g, ATP5MK/subunit k, ATP5MJ/subunit j, ATP5F1C/subunit gamma, ATP5F1D/subunit delta, ATP5F1E/subunit epsilon, ATP5PF/subunit F6, ATP5PB/subunit b, ATP5PD/subunit d, ATP5PO/subunit OSCP. ATP synthase complex consists of a soluble F(1) head domain (subunits alpha(3) and beta(3)) - the catalytic core - and a membrane F(0) domain - the membrane proton channel (subunits c, a, 8, e, f, g, k and j). These two domains are linked by a central stalk (subunits gamma, delta, and epsilon) rotating inside the F1 region and a stationary peripheral stalk (subunits F6, b, d, and OSCP).

The protein localises to the mitochondrion membrane. Subunit 8, of the mitochondrial membrane ATP synthase complex (F(1)F(0) ATP synthase or Complex V) that produces ATP from ADP in the presence of a proton gradient across the membrane which is generated by electron transport complexes of the respiratory chain. ATP synthase complex consist of a soluble F(1) head domain - the catalytic core - and a membrane F(1) domain - the membrane proton channel. These two domains are linked by a central stalk rotating inside the F(1) region and a stationary peripheral stalk. During catalysis, ATP synthesis in the catalytic domain of F(1) is coupled via a rotary mechanism of the central stalk subunits to proton translocation. In vivo, can only synthesize ATP although its ATP hydrolase activity can be activated artificially in vitro. Part of the complex F(0) domain. This is ATP synthase F(0) complex subunit 8 from Opisthocomus hoazin (Hoatzin).